We begin with the raw amino-acid sequence, 383 residues long: Large ribosomal subunit protein uL2m (383 aa).

Disordered stretches follow at residues F97 to H122 and M322 to R357. Composition is skewed to basic residues over residues G106 to H122 and G330 to R340.

Belongs to the universal ribosomal protein uL2 family. As to quaternary structure, component of the mitochondrial large ribosomal subunit (mt-LSU). Mature N.crassa 74S mitochondrial ribosomes consist of a small (37S) and a large (54S) subunit. The 37S small subunit contains a 16S ribosomal RNA (16S mt-rRNA) and 32 different proteins. The 54S large subunit contains a 23S rRNA (23S mt-rRNA) and 42 different proteins.

The protein localises to the mitochondrion. Its function is as follows. Component of the mitochondrial ribosome (mitoribosome), a dedicated translation machinery responsible for the synthesis of mitochondrial genome-encoded proteins, including at least some of the essential transmembrane subunits of the mitochondrial respiratory chain. The mitoribosomes are attached to the mitochondrial inner membrane and translation products are cotranslationally integrated into the membrane. This chain is Large ribosomal subunit protein uL2m (rml2), found in Neurospora crassa (strain ATCC 24698 / 74-OR23-1A / CBS 708.71 / DSM 1257 / FGSC 987).